Reading from the N-terminus, the 288-residue chain is Polyamine aminopropyltransferase (288 aa).

The region spanning 9 to 238 is the PABS domain; the sequence is ETLHDQFGQY…GIMTFAWATD (230 aa). Residue Gln-33 participates in S-methyl-5'-thioadenosine binding. Spermidine contacts are provided by His-64 and Asp-88. Residues Glu-108 and 140–141 contribute to the S-methyl-5'-thioadenosine site; that span reads DG. Asp-158 functions as the Proton acceptor in the catalytic mechanism. 158 to 161 provides a ligand contact to spermidine; that stretch reads DCTD. Pro-165 provides a ligand contact to S-methyl-5'-thioadenosine.

Belongs to the spermidine/spermine synthase family. As to quaternary structure, homodimer or homotetramer.

It localises to the cytoplasm. The catalysed reaction is S-adenosyl 3-(methylsulfanyl)propylamine + putrescine = S-methyl-5'-thioadenosine + spermidine + H(+). It participates in amine and polyamine biosynthesis; spermidine biosynthesis; spermidine from putrescine: step 1/1. Catalyzes the irreversible transfer of a propylamine group from the amino donor S-adenosylmethioninamine (decarboxy-AdoMet) to putrescine (1,4-diaminobutane) to yield spermidine. The polypeptide is Polyamine aminopropyltransferase (Shigella sonnei (strain Ss046)).